Consider the following 480-residue polypeptide: Ribulose bisphosphate carboxylase large chain (480 aa).

Residues 1-2 (MS) constitute a propeptide that is removed on maturation. P3 carries the N-acetylproline modification. At K14 the chain carries N6,N6,N6-trimethyllysine. Residues N123 and T173 each contribute to the substrate site. K175 functions as the Proton acceptor in the catalytic mechanism. K177 lines the substrate pocket. 3 residues coordinate Mg(2+): K201, D203, and E204. Residue K201 is modified to N6-carboxylysine. H294 serves as the catalytic Proton acceptor. Substrate-binding residues include R295, H327, and S379.

The protein belongs to the RuBisCO large chain family. Type I subfamily. Heterohexadecamer of 8 large chains and 8 small chains; disulfide-linked. The disulfide link is formed within the large subunit homodimers. Mg(2+) is required as a cofactor. Post-translationally, the disulfide bond which can form in the large chain dimeric partners within the hexadecamer appears to be associated with oxidative stress and protein turnover.

The protein localises to the plastid. Its subcellular location is the chloroplast. It carries out the reaction 2 (2R)-3-phosphoglycerate + 2 H(+) = D-ribulose 1,5-bisphosphate + CO2 + H2O. The enzyme catalyses D-ribulose 1,5-bisphosphate + O2 = 2-phosphoglycolate + (2R)-3-phosphoglycerate + 2 H(+). RuBisCO catalyzes two reactions: the carboxylation of D-ribulose 1,5-bisphosphate, the primary event in carbon dioxide fixation, as well as the oxidative fragmentation of the pentose substrate in the photorespiration process. Both reactions occur simultaneously and in competition at the same active site. The sequence is that of Ribulose bisphosphate carboxylase large chain from Phalaenopsis aphrodite subsp. formosana (Moth orchid).